A 600-amino-acid chain; its full sequence is MRSCLWRCRHLSQGVQWSLLLAVLVFFLFALPSFIKEPQTKPSRHQRTENIKERSLQSLAKPKSQAPTRARRTTIYAEPVPENNALNTQTQPKAHTTGDRGKEANQAPPEEQDKVPHTAQRAAWKSPEKEKTMVNTLSPRGQDAGMASGRTEAQSWKSQDTKTTQGNGGQTRKLTASRTVSEKHQGKAATTAKTLIPKSQHRMLAPTGAVSTRTRQKGVTTAVIPPKEKKPQATPPPAPFQSPTTQRNQRLKAANFKSEPRWDFEEKYSFEIGGLQTTCPDSVKIKASKSLWLQKLFLPNLTLFLDSRHFNQSEWDRLEHFAPPFGFMELNYSLVQKVVTRFPPVPQQQLLLASLPAGSLRCITCAVVGNGGILNNSHMGQEIDSHDYVFRLSGALIKGYEQDVGTRTSFYGFTAFSLTQSLLILGNRGFKNVPLGKDVRYLHFLEGTRDYEWLEALLMNQTVMSKNLFWFRHRPQEAFREALHMDRYLLLHPDFLRYMKNRFLRSKTLDGAHWRIYRPTTGALLLLTALQLCDQVSAYGFITEGHERFSDHYYDTSWKRLIFYINHDFKLEREVWKRLHDEGIIRLYQRPGPGTAKAKN.

Topologically, residues 1 to 14 (MRSCLWRCRHLSQG) are cytoplasmic. Residues 15–35 (VQWSLLLAVLVFFLFALPSFI) form a helical; Signal-anchor for type II membrane protein membrane-spanning segment. Residues 36-600 (KEPQTKPSRH…PGPGTAKAKN (565 aa)) lie on the Lumenal side of the membrane. Disordered stretches follow at residues 38-191 (PQTK…AATT) and 208-248 (GAVS…TQRN). Over residues 46 to 55 (QRTENIKERS) the composition is skewed to basic and acidic residues. Composition is skewed to polar residues over residues 84-94 (NALNTQTQPKA), 151-179 (TEAQ…ASRT), and 209-219 (AVSTRTRQKGV). 2 disulfides stabilise this stretch: C279/C362 and C365/C533. N300, N311, N331, N375, and N460 each carry an N-linked (GlcNAc...) asparagine glycan.

The protein belongs to the glycosyltransferase 29 family. Post-translationally, glycosylated; autosialylated. In terms of tissue distribution, expression is restricted to the gastrointestinal tract. Highly expressed in goblet cells. Also expressed in various tumor cells.

Its subcellular location is the golgi apparatus membrane. The enzyme catalyses a beta-D-galactosyl-(1-&gt;3)-N-acetyl-alpha-D-galactosaminyl derivative + CMP-N-acetyl-beta-neuraminate = a beta-D-galactosyl-(1-&gt;3)-[N-acetyl-alpha-neuraminyl-(2-&gt;6)]-N-acetyl-alpha-D-galactosaminyl derivative + CMP + H(+). The catalysed reaction is a 3-O-[N-acetyl-alpha-D-galactosaminyl]-L-seryl-[protein] + CMP-N-acetyl-beta-neuraminate = a 3-O-[N-acetyl-alpha-neuraminosyl-(2-&gt;6)-N-acetyl-alpha-D-galactosaminyl]-L-seryl-[protein] + CMP + H(+). It catalyses the reaction a 3-O-[N-acetyl-alpha-D-galactosaminyl]-L-threonyl-[protein] + CMP-N-acetyl-beta-neuraminate = a 3-O-[N-acetyl-alpha-neuraminosyl-(2-&gt;6)-N-acetyl-alpha-D-galactosaminyl]-L-threonyl-[protein] + CMP + H(+). It carries out the reaction a 3-O-[beta-D-galactosyl-(1-&gt;3)-N-acetyl-alpha-D-galactosaminyl]-L-seryl-[protein] + CMP-N-acetyl-beta-neuraminate = a 3-O-{beta-D-galactosyl-(1-&gt;3)-[N-acetyl-alpha-neuraminosyl-(2-&gt;6)]-N-acetyl-alpha-D-galactosaminyl}-L-seryl-[protein] + CMP + H(+). The enzyme catalyses a 3-O-[beta-D-galactosyl-(1-&gt;3)-N-acetyl-alpha-D-galactosaminyl]-L-threonyl-[protein] + CMP-N-acetyl-beta-neuraminate = a 3-O-{beta-D-galactosyl-(1-&gt;3)-[N-acetyl-alpha-neuraminosyl-(2-&gt;6)]-N-acetyl-alpha-D-galactosaminyl}-L-threonyl-[protein] + CMP + H(+). The catalysed reaction is a 3-O-[N-acetyl-alpha-neuraminyl-(2-&gt;3)-beta-D-galactosyl-(1-&gt;3)-N-acetyl-alpha-D-galactosaminyl]-L-threonyl-[protein] + CMP-N-acetyl-beta-neuraminate = a 3-O-{alpha-Neu5Ac-(2-&gt;3)-beta-D-Gal-(1-&gt;3)-[alpha-Neu5Ac-(2-&gt;6)]-alpha-D-GalNAc}-L-threonyl-[protein] + CMP + H(+). It participates in protein modification; protein glycosylation. In terms of biological role, protein sialyltransferase specifically expressed in goblet cells that plays a key role in intestinal host-commensal homeostasis. Conjugates sialic acid with an alpha-2-6 linkage to N-acetylgalactosamine (GalNAc) glycan chains linked to serine or threonine in glycoproteins. Catalyzes the formation of the sialyl-Tn (S-Tn) antigen, an antigen found in intestinal goblet cells, as well as ulcerative colitis (UC) and various cancers. Protein sialylation in globlet cells is essential for mucus integrity and is required to protect the intestinal mucus against excessive bacterial proteolytic degradation. This chain is Alpha-N-acetylgalactosaminide alpha-2,6-sialyltransferase 1, found in Homo sapiens (Human).